Here is a 276-residue protein sequence, read N- to C-terminus: NAD kinase (276 aa).

D66 serves as the catalytic Proton acceptor. Residues 66–67, 139–140, D168, 179–184, and Q234 each bind NAD(+); these read DG, ND, and TAYNIS.

This sequence belongs to the NAD kinase family. A divalent metal cation serves as cofactor.

It is found in the cytoplasm. The catalysed reaction is NAD(+) + ATP = ADP + NADP(+) + H(+). In terms of biological role, involved in the regulation of the intracellular balance of NAD and NADP, and is a key enzyme in the biosynthesis of NADP. Catalyzes specifically the phosphorylation on 2'-hydroxyl of the adenosine moiety of NAD to yield NADP. The protein is NAD kinase of Campylobacter lari (strain RM2100 / D67 / ATCC BAA-1060).